Reading from the N-terminus, the 244-residue chain is L-xylulose reductase (244 aa).

At Met1 the chain carries N-acetylmethionine. 11 to 39 provides a ligand contact to NADP(+); the sequence is LVTGAGKGIGRSTVLALKAAGAQVVAVSR. Arg21 bears the Omega-N-methylarginine mark. Ser136 lines the substrate pocket. Residue Tyr149 is the Proton acceptor of the active site. Lys153 is an active-site residue.

It belongs to the short-chain dehydrogenases/reductases (SDR) family. As to quaternary structure, homotetramer. Highly expressed in kidney and liver. Expressed in epididymis. Expressed at intermediate level in lung. Weakly expressed in brain, heart, spleen and testis.

It is found in the membrane. It carries out the reaction xylitol + NADP(+) = L-xylulose + NADPH + H(+). Catalyzes the NADPH-dependent reduction of several pentoses, tetroses, trioses, alpha-dicarbonyl compounds and L-xylulose. Participates in the uronate cycle of glucose metabolism. May play a role in the water absorption and cellular osmoregulation in the proximal renal tubules by producing xylitol, an osmolyte, thereby preventing osmolytic stress from occurring in the renal tubules. The protein is L-xylulose reductase (DCXR) of Cavia porcellus (Guinea pig).